Reading from the N-terminus, the 86-residue chain is Insulin-related peptide 2 (86 aa).

Positions 1 to 19 (MKFYIVFALILACAACVSS) are cleaved as a signal peptide. Residues 20-43 (QEGTNFYCGRQLSRTLALVCWGAE) constitute a propeptide that is removed on maturation. R63 carries the post-translational modification Arginine amide. A propeptide spanning residues 67-86 (GPVDECCLKPCSIEEMLTYC) is cleaved from the precursor.

This sequence belongs to the insulin family. As to expression, DAGWWVPPQSARALGGGR-amide: Expressed in corpora cardiaca (CC), corpora allata (CA), antennal lobe (AL) and gnathal ganglion (GNG) (at protein level). Expression in CC and CA detected in most animals, in AL in some animals and in GNG in few animals (at protein level).

The protein resides in the secreted. The protein is Insulin-related peptide 2 of Agrotis ipsilon (Black cutworm moth).